The chain runs to 920 residues: Protein FAN (920 aa).

The GRAM domain occupies 176-247 (RLARTSFDKN…QDVRRIYKRR (72 aa)). The region spanning 189–286 (SVSEKLHMEC…DRDDLYFYIA (98 aa)) is the BEACH-type PH domain. The 286-residue stretch at 290–575 (EHHAAEHTAE…QLFVTPHPRR (286 aa)) folds into the BEACH domain. 6 WD repeats span residues 631 to 661 (IHKE…KMFS), 673 to 703 (FSNM…YFYS), 715 to 743 (GHDD…KVWS), 764 to 794 (EHDV…NIWD), 806 to 836 (CHSG…NVID), and 887 to 917 (GHTG…MFWK).

Functionally, couples the p55 TNF-receptor (TNF-R55 / TNFR1) to neutral sphingomyelinase (N-SMASE). Specifically binds to the N-smase activation domain of TNF-R55. May regulate ceramide production by N-SMASE. The chain is Protein FAN (Nsmaf) from Mus musculus (Mouse).